We begin with the raw amino-acid sequence, 307 residues long: 4-hydroxythreonine-4-phosphate dehydrogenase (307 aa).

2 residues coordinate substrate: His126 and Thr127. A divalent metal cation is bound by residues His156, His195, and His251. Substrate contacts are provided by Lys259, Asn268, and Arg277.

This sequence belongs to the PdxA family. As to quaternary structure, homodimer. The cofactor is Zn(2+). Mg(2+) is required as a cofactor. It depends on Co(2+) as a cofactor.

The protein localises to the cytoplasm. The enzyme catalyses 4-(phosphooxy)-L-threonine + NAD(+) = 3-amino-2-oxopropyl phosphate + CO2 + NADH. The protein operates within cofactor biosynthesis; pyridoxine 5'-phosphate biosynthesis; pyridoxine 5'-phosphate from D-erythrose 4-phosphate: step 4/5. Its function is as follows. Catalyzes the NAD(P)-dependent oxidation of 4-(phosphooxy)-L-threonine (HTP) into 2-amino-3-oxo-4-(phosphooxy)butyric acid which spontaneously decarboxylates to form 3-amino-2-oxopropyl phosphate (AHAP). The chain is 4-hydroxythreonine-4-phosphate dehydrogenase from Helicobacter pylori (strain P12).